The sequence spans 1603 residues: MEAVIKVISSACKTYCGKISPSKKEIGAMLSLLQKEGLLMSPSDLYSPGSWDPITAALSQRAMVLGKSGELKTWGLVLGALKAAREEQVTSEQAKFWLGLGGGRVSPPGPECIEKPATERRIDKGEEVGETTAQRDAKMAPEKMATPKTVGTSCYQCGTATGCNCATASAPPPPYVGSGLYPSLAGVGEQQGQGGDTPWGAEQPRAEPGHAGLAPGPALTDWARIREELASTGPPVVAMPVVIKTEGPAWTPLEPKLITRLADTVRTKGLRSPITMAEVEALMSSPLLPHDVTNLMRVILGPAPYALWMDAWGVQLQTVIAAATRDPRHPANGQGRGERTNLDRLKGLADGMVGNPQGQAALLRPGELVAITASALQAFREVARLAEPAGPWADITQGPSESFVDFANRLIKAVEGSDLPPSARAPVIIDCFRQKSQPDIQQLIRAAPSTLTTPGEIIKYVLDRQKIAPLTDQGIAAAMSSAIQPLVMAVVNRERDGQTGSGGRARGLCYTCGSPGHYQAQCPKKRKSGNSRERCQLCDGMGHNAKQCRRRDGNQGQRPGKGLSSGSWPVSEQPAVSLAMTMEHKDRPLVRVILTNTGSHPVKQRSVYITALLDSGADITIISEEDWPTDWPVMEAANPQIHGIGGGIPMRKSRDMIEVGVINRDGSLERPLLLFPAVAMVRGSILGRDCLQGLGLRLTNLIGRATVLTVALHLAIPLKWKPDHTPVWIDQWPLPEGKLVALTQLVEKELQLGHIEPSLSCWNTPVFVIRKASGSYRLLHDLRAVNAKLVPFGAVQQGAPVLSALPRGWPLMVLDLKDCFFSIPLAEQDREAFAFTLPSVNNQAPARRFQWKVLPQGMTCSPTICQLVVGQVLEPLRLKHPSLRMLHYMDDLLLAASSHDGLEAAGEEVISTLERAGFTISPDKIQREPGVQYLGYKLGSTYVAPVGLVAEPRIATLWDVQKLVGSLQWLRPALGIPPRLMGPFYEQLRGSDPNEAREWNLDMKMAWREIVQLSTTAALERWDPALPLEGAVARCEQGAIGVLGQGLSTHPRPCLWLFSTQPTKAFTAWLEVLTLLITKLRASAVRTFGKEVDILLLPACFREDLPLPEGILLALRGFAGKIRSSDTPSIFDIARPLHVSLKVRVTDHPVPGPTAFTDASSSTHKGVVVWREGPRWEIKEIADLGASVQQLEARAVAMALLLWPTTPTNVVTDSAFVAKMLLKMGQEGVPSTAAAFILEDALSQRSAMAAVLHVRSHSEVPGFFTEGNDVADSQATFQAYPLREAKDLHTALHIGPRALSKACNISMQQAREVVQTCPHCNSAPALEAGVNPRGLGPLQIWQTDFTLEPRMAPRSWLAVTVDTASSAIVVTQHGRVTSVAAQHHWATAIAVLGRPKAIKTDNGSCFTSKSTREWLARWGIAHTTGIPGNSQGQAMVERANRLLKDKIRVLAEGDGFMKRIPTSKQGELLAKAMYALNHFERGENTKTPIQKHWRPTVLTEGPPVKIRIETGEWEKGWNVLVWGRGYAAVKNRDTDKVIWVPSRKVKPDVTQKDEVTKKDEASPLFAGISDWIPWEDEQEGLQGETASNKQERPGEDTLAANES.

A compositionally biased stretch (basic and acidic residues) spans 124–141 (KGEEVGETTAQRDAKMAP). The segment at 124–144 (KGEEVGETTAQRDAKMAPEKM) is disordered. The PPXY motif motif lies at 172-175 (PPPY). The LYPX(n)L motif signature appears at 180–184 (LYPSL). Positions 219–229 (LTDWARIREEL) match the Nuclear export signal motif. 2 consecutive CCHC-type zinc fingers follow at residues 507–524 (GLCY…QCPK) and 533–550 (ERCQ…QCRR). The tract at residues 544 to 571 (NAKQCRRRDGNQGQRPGKGLSSGSWPVS) is disordered. Positions 609 to 690 (ITALLDSGAD…VRGSILGRDC (82 aa)) constitute a Peptidase A2 domain. Asp-614 (for protease activity; shared with dimeric partner) is an active-site residue. Positions 750–938 (LQLGHIEPSL…PGVQYLGYKL (189 aa)) constitute a Reverse transcriptase domain. Mg(2+)-binding residues include Asp-815, Asp-890, Asp-891, Asp-1158, Glu-1192, Asp-1213, and Asp-1272. Positions 1149–1280 (PVPGPTAFTD…ADSQATFQAY (132 aa)) constitute an RNase H type-1 domain. The Integrase-type zinc finger occupies 1280–1321 (YPLREAKDLHTALHIGPRALSKACNISMQQAREVVQTCPHCN). Residues His-1289, His-1293, Cys-1317, and Cys-1320 each contribute to the Zn(2+) site. The region spanning 1333–1496 (RGLGPLQIWQ…TPIQKHWRPT (164 aa)) is the Integrase catalytic domain. Asp-1344, Asp-1401, and Glu-1437 together coordinate Mg(2+). Positions 1502–1550 (PPVKIRIETGEWEKGWNVLVWGRGYAAVKNRDTDKVIWVPSRKVKPDVT) form a DNA-binding region, integrase-type. Positions 1548–1567 (DVTQKDEVTKKDEASPLFAG) are involved in homooctamerization. Residues 1566–1603 (AGISDWIPWEDEQEGLQGETASNKQERPGEDTLAANES) are disordered.

In terms of assembly, active as a homodimer. Homodimer. Homomultimer. Homohexamer. As to quaternary structure, homodimer; further associates as a homooctamer. In terms of assembly, heterodimer of alpha and beta subunits. Three forms of RT exist: alpha-alpha (alpha-Pol), beta-beta (beta-Pol), and alpha-beta, with the major form being the heterodimer. Both the polymerase and RNase H active sites are located in the alpha subunit of heterodimeric RT alpha-beta. Requires Mg(2+) as cofactor. Mn(2+) serves as cofactor. Post-translationally, specific enzymatic cleavages in vivo yield mature proteins. In terms of processing, capsid protein p27: The cleavage at the C-terminus is slowly trimmed by the viral protease, sometimes being cut internally thereby generating the short version of the capsid protein and a capsid protein C-terminally extended by 3 amino acids in a ratio of 2:1.

It is found in the virion. The enzyme catalyses DNA(n) + a 2'-deoxyribonucleoside 5'-triphosphate = DNA(n+1) + diphosphate. It carries out the reaction Endonucleolytic cleavage to 5'-phosphomonoester.. Capsid protein p27: Self-associates to form the irregular polyhedron core composed of hexamers and pentamers, that encapsulates the genomic RNA-nucleocapsid complex. Assembles as a tube in vitro. Binds to inositol hexakisphosphate (IP6), which allows the assembly of the polyhedral capsid. Functionally, spacer peptide: Plays a role in the oligomerization of the Gag polyprotein and in the stabilization of the immature particle. Essential layering element during tube assembly. In terms of biological role, binds strongly to viral nucleic acids and promotes their packaging. Plays a role in the maturation-stabilization of the viral dimeric RNA via highly structured zinc-binding motifs. Its function is as follows. The aspartyl protease that mediates proteolytic cleavages of Gag and Gag-Pol polyproteins during or shortly after the release of the virion from the plasma membrane. Cleavages take place as an ordered, step-wise cascade to yield mature proteins. This process is called maturation. Displays maximal activity during the budding process just prior to particle release from the cell. Catalyzes viral DNA integration into the host chromosome, by performing a series of DNA cutting and joining reactions. This recombination event is an essential step in the viral replication cycle. Has a strong preference for using the 3'-OH at the viral DNA end as a nucleophile. This chain is Gag-Pol polyprotein (gag-pol), found in Avian leukosis virus subgroup A (isolate RSA) (ALV-A RSA).